Consider the following 548-residue polypeptide: Uridine-cytidine kinase-like 1 (548 aa).

The segment covering 1-18 has biased composition (low complexity); it reads MAAPPASMSAAPSPLQSA. The disordered stretch occupies residues 1–74; it reads MAAPPASMSA…CKSEPPLLRT (74 aa). Residues Ser56 and Ser63 each carry the phosphoserine modification. Residue 105-112 participates in ATP binding; sequence GGSASGKT. Ser539 carries the post-translational modification Phosphoserine.

Belongs to the uridine kinase family. As to quaternary structure, interacts with RNF19B. Ubiquitinated by RNF19B; which induces proteasomal degradation.

The protein resides in the cytoplasm. Its subcellular location is the nucleus. It catalyses the reaction uridine + ATP = UMP + ADP + H(+). The enzyme catalyses cytidine + ATP = CMP + ADP + H(+). The protein operates within pyrimidine metabolism; UMP biosynthesis via salvage pathway; UMP from uridine: step 1/1. Its function is as follows. May contribute to UTP accumulation needed for blast transformation and proliferation. The polypeptide is Uridine-cytidine kinase-like 1 (Uckl1) (Mus musculus (Mouse)).